The chain runs to 152 residues: 3-hydroxyacyl-[acyl-carrier-protein] dehydratase FabZ (152 aa).

His58 is an active-site residue.

Belongs to the thioester dehydratase family. FabZ subfamily.

Its subcellular location is the cytoplasm. It catalyses the reaction a (3R)-hydroxyacyl-[ACP] = a (2E)-enoyl-[ACP] + H2O. Involved in unsaturated fatty acids biosynthesis. Catalyzes the dehydration of short chain beta-hydroxyacyl-ACPs and long chain saturated and unsaturated beta-hydroxyacyl-ACPs. In Prochlorococcus marinus (strain MIT 9301), this protein is 3-hydroxyacyl-[acyl-carrier-protein] dehydratase FabZ.